A 65-amino-acid polypeptide reads, in one-letter code: Large ribosomal subunit protein bL35 (65 aa).

The protein belongs to the bacterial ribosomal protein bL35 family.

The sequence is that of Large ribosomal subunit protein bL35 from Caldicellulosiruptor bescii (strain ATCC BAA-1888 / DSM 6725 / KCTC 15123 / Z-1320) (Anaerocellum thermophilum).